Consider the following 767-residue polypeptide: Photosystem I P700 chlorophyll a apoprotein A1 (767 aa).

Residues 1–22 (MTISPPESGEKDKKILESPVKA) form a disordered region. Over residues 8–22 (SGEKDKKILESPVKA) the composition is skewed to basic and acidic residues. A run of 8 helical transmembrane segments spans residues 76–99 (IFSAHFGHLAVIFIWMSAAFFHGA), 162–185 (LMALAIGAVVMAALMLHAGIFHYH), 201–225 (LNHHIAGLVGLGSLAWAGHCIHIGA), 309–327 (VSHHHLAFGVIAIIGGHMY), 368–391 (RHAQLSVNLAMLGSLSILISHHMY), 407–433 (LGLFTHHMWIGGLFIVGAGAHAGIAMV), 455–477 (ALISHLNWVCMWLGFHSFGLYIH), and 558–576 (LMIHHIHAFQIHVTVLILL). [4Fe-4S] cluster contacts are provided by Cys600 and Cys609. The next 2 membrane-spanning stretches (helical) occupy residues 616–637 (HVFLGLFWMYNCLSIVIFHFSW) and 681–703 (ISMYGLMFLGAHFIWAFSLMFLF). His692 is a binding site for divinylchlorophyll a'. Met700 and Tyr708 together coordinate divinyl chlorophyll a. Trp709 is a binding site for phylloquinone. The helical transmembrane segment at 741–761 (AVGVTHFLVGGIATTWAFFHA) threads the bilayer.

The protein belongs to the PsaA/PsaB family. As to quaternary structure, the PsaA/B heterodimer binds the P700 divinyl chlorophyll special pair and subsequent electron acceptors. PSI consists of a core antenna complex that captures photons, and an electron transfer chain that converts photonic excitation into a charge separation. The cyanobacterial PSI reaction center is composed of one copy each of PsaA,B,C,D,E,F,I,J,K,L,M and X, and forms trimeric complexes. The cofactor is PSI electron transfer chain: 5 divinyl chlorophyll a, 1 divinyl chlorophyll a', 2 phylloquinones and 3 4Fe-4S clusters. PSI core antenna: 90 divinyl chlorophyll a, 22 carotenoids, 3 phospholipids and 1 galactolipid. P700 is a divinyl chlorophyll a/divinyl chlorophyll a' dimer, A0 is one or more divinyl chlorophyll a, A1 is one or both phylloquinones and FX is a shared 4Fe-4S iron-sulfur center..

It is found in the cellular thylakoid membrane. It carries out the reaction reduced [plastocyanin] + hnu + oxidized [2Fe-2S]-[ferredoxin] = oxidized [plastocyanin] + reduced [2Fe-2S]-[ferredoxin]. Functionally, psaA and PsaB bind P700, the primary electron donor of photosystem I (PSI), as well as the electron acceptors A0, A1 and FX. PSI is a plastocyanin/cytochrome c6-ferredoxin oxidoreductase, converting photonic excitation into a charge separation, which transfers an electron from the donor P700 chlorophyll pair to the spectroscopically characterized acceptors A0, A1, FX, FA and FB in turn. Oxidized P700 is reduced on the lumenal side of the thylakoid membrane by plastocyanin or cytochrome c6. This is Photosystem I P700 chlorophyll a apoprotein A1 from Prochlorococcus marinus subsp. pastoris (strain CCMP1986 / NIES-2087 / MED4).